A 1322-amino-acid polypeptide reads, in one-letter code: Myosin-1 (1322 aa).

Positions Ala-42–Asp-728 constitute a Myosin motor domain. Gly-135–Thr-142 provides a ligand contact to ATP. The residue at position 369 (Ser-369) is a Phosphoserine. The interval Val-417–Ala-499 is actin-binding. IQ domains lie at His-732 to Ser-752 and Ala-753 to Gln-778. In terms of domain architecture, TH1 spans Arg-786–Arg-980. 2 disordered regions span residues Ile-966–Tyr-1090 and Val-1137–Ala-1162. 2 stretches are compositionally biased toward low complexity: residues Ser-1000 to Thr-1017 and Gly-1027 to Ala-1056. 2 stretches are compositionally biased toward polar residues: residues Pro-1078–Met-1087 and Val-1137–Thr-1148. One can recognise an SH3 domain in the interval Arg-1184 to Glu-1243. Residues Ala-1246–Phe-1300 form a disordered region. Positions Pro-1257–Ala-1267 are enriched in low complexity. The span at Val-1269 to Pro-1280 shows a compositional bias: polar residues.

This sequence belongs to the TRAFAC class myosin-kinesin ATPase superfamily. Myosin family. Phosphorylation of the TEDS site (Ser-369) is required for the polarization of the actin cytoskeleton. Phosphorylation probably activates the myosin-I ATPase activity.

Its subcellular location is the cytoplasm. It is found in the cytoskeleton. The protein resides in the actin patch. Type-I myosin implicated in the organization of the actin cytoskeleton. Required for proper actin cytoskeleton polarization. At the cell cortex, assembles in patch-like structures together with proteins from the actin-polymerizing machinery and promotes actin assembly. Functions as actin nucleation-promoting factor (NPF) for the Arp2/3 complex. The chain is Myosin-1 (MYO1) from Malassezia globosa (strain ATCC MYA-4612 / CBS 7966) (Dandruff-associated fungus).